The sequence spans 100 residues: Urease subunit gamma (100 aa).

The protein belongs to the urease gamma subunit family. As to quaternary structure, heterotrimer of UreA (gamma), UreB (beta) and UreC (alpha) subunits. Three heterotrimers associate to form the active enzyme.

The protein localises to the cytoplasm. It carries out the reaction urea + 2 H2O + H(+) = hydrogencarbonate + 2 NH4(+). It functions in the pathway nitrogen metabolism; urea degradation; CO(2) and NH(3) from urea (urease route): step 1/1. The sequence is that of Urease subunit gamma from Cereibacter sphaeroides (strain ATCC 17029 / ATH 2.4.9) (Rhodobacter sphaeroides).